A 494-amino-acid chain; its full sequence is Glutamyl-tRNA(Gln) amidotransferase subunit A (494 aa).

Residues Lys81 and Ser156 each act as charge relay system in the active site. Ser180 acts as the Acyl-ester intermediate in catalysis.

Belongs to the amidase family. GatA subfamily. Heterotrimer of A, B and C subunits.

It carries out the reaction L-glutamyl-tRNA(Gln) + L-glutamine + ATP + H2O = L-glutaminyl-tRNA(Gln) + L-glutamate + ADP + phosphate + H(+). Functionally, allows the formation of correctly charged Gln-tRNA(Gln) through the transamidation of misacylated Glu-tRNA(Gln) in organisms which lack glutaminyl-tRNA synthetase. The reaction takes place in the presence of glutamine and ATP through an activated gamma-phospho-Glu-tRNA(Gln). In Mycolicibacterium gilvum (strain PYR-GCK) (Mycobacterium gilvum (strain PYR-GCK)), this protein is Glutamyl-tRNA(Gln) amidotransferase subunit A.